A 124-amino-acid chain; its full sequence is Large ribosomal subunit protein bL12 (124 aa).

It belongs to the bacterial ribosomal protein bL12 family. As to quaternary structure, homodimer. Part of the ribosomal stalk of the 50S ribosomal subunit. Forms a multimeric L10(L12)X complex, where L10 forms an elongated spine to which 2 to 4 L12 dimers bind in a sequential fashion. Binds GTP-bound translation factors.

Forms part of the ribosomal stalk which helps the ribosome interact with GTP-bound translation factors. Is thus essential for accurate translation. This is Large ribosomal subunit protein bL12 from Akkermansia muciniphila (strain ATCC BAA-835 / DSM 22959 / JCM 33894 / BCRC 81048 / CCUG 64013 / CIP 107961 / Muc).